The sequence spans 344 residues: Dihydroorotase (344 aa).

Zn(2+) is bound by residues His-13 and His-15. Substrate contacts are provided by residues 15–17 and Asn-41; that span reads HLR. 3 residues coordinate Zn(2+): Lys-99, His-136, and His-174. Lys-99 carries the N6-carboxylysine modification. His-136 is a binding site for substrate. Leu-219 is a substrate binding site. Asp-247 is a binding site for Zn(2+). Residue Asp-247 is part of the active site. Substrate contacts are provided by His-251 and Ala-263.

It belongs to the metallo-dependent hydrolases superfamily. DHOase family. Class II DHOase subfamily. As to quaternary structure, homodimer. Zn(2+) serves as cofactor.

The catalysed reaction is (S)-dihydroorotate + H2O = N-carbamoyl-L-aspartate + H(+). Its pathway is pyrimidine metabolism; UMP biosynthesis via de novo pathway; (S)-dihydroorotate from bicarbonate: step 3/3. In terms of biological role, catalyzes the reversible cyclization of carbamoyl aspartate to dihydroorotate. This Acinetobacter baumannii (strain AB307-0294) protein is Dihydroorotase.